The sequence spans 151 residues: Large ribosomal subunit protein bL9 (151 aa).

This sequence belongs to the bacterial ribosomal protein bL9 family.

Functionally, binds to the 23S rRNA. The protein is Large ribosomal subunit protein bL9 of Bordetella petrii (strain ATCC BAA-461 / DSM 12804 / CCUG 43448).